The following is a 135-amino-acid chain: T-cell receptor gamma chain V region V108A (135 aa).

Residues 1–18 (MLLLRWFTSCCLWVFGLG) form the signal peptide. Positions 19–116 (QLEQTELSVT…EATYYCAVWM (98 aa)) are v segment. The j segment stretch occupies residues 117 to 135 (RWSSGFHKVFAEGTKLIVI).

The protein is T-cell receptor gamma chain V region V108A of Mus musculus (Mouse).